Reading from the N-terminus, the 393-residue chain is Cysteine protease ATG4B (393 aa).

Methionine 1 is subject to N-acetylmethionine. Serine 34 carries the post-translational modification Phosphoserine. Cysteine 74 functions as the Nucleophile in the catalytic mechanism. An S-nitrosocysteine modification is found at cysteine 189. Residues aspartate 278 and histidine 280 contribute to the active site. An S-nitrosocysteine mark is found at cysteine 292 and cysteine 301. Cysteine 292 and cysteine 361 are disulfide-bonded. 2 positions are modified to phosphoserine: serine 316 and serine 383. The LIR motif lies at 388–391 (FEIL). Residue serine 392 is modified to Phosphoserine.

This sequence belongs to the peptidase C54 family. Interacts with PFKP; promoting phosphorylation of ATG4B at Ser-34. Interacts with GBP7. Post-translationally, phosphorylation at Ser-383 and Ser-392 promotes autophagy by increasing protein delipidation activity without affecting proteolytic activation of ATG8 proteins. Phosphorylation at Ser-316 by ULK1 inhibits autophagy by decreasing both proteolytic activation and delipidation activities. Phosphorylation at Ser-316 is dephosphorylated by protein phosphatase 2A (PP2A). Phosphorylation at Ser-34 by AKT2 promotes its hydrolase activity, leading to increased proteolytic activation and delipidation of ATG8 family proteins. Phosphorylation at Ser-34 by AKT1 promotes mitochondrial localization and inhibition of the F1F0-ATP synthase activity, leading to elevation of mitochondrial reactive oxygen species (ROS). In terms of processing, ubiquitinated by RNF5, leading to its degradation by the proteasome. S-nitrosylation at Cys-189 and Cys-292 in response to high glucose decreases both proteolytic activation and delipidation activities. Post-translationally, O-glycosylated by OGT, leading to increase protease activity, thereby promoting the proteolytic activation of ATG8 family proteins. In terms of processing, forms reversible intrachain disulfide bonds in response to oxidative stress. Forms interchain disulfide bonds, leading to formation of homooligomers in response to oxidation.

It is found in the cytoplasm. The protein resides in the cytosol. It localises to the cytoplasmic vesicle. The protein localises to the autophagosome. Its subcellular location is the endoplasmic reticulum. It is found in the mitochondrion. The catalysed reaction is [protein]-C-terminal L-amino acid-glycyl-phosphatidylethanolamide + H2O = [protein]-C-terminal L-amino acid-glycine + a 1,2-diacyl-sn-glycero-3-phosphoethanolamine. It catalyses the reaction [protein]-C-terminal L-amino acid-glycyl-phosphatidylserine + H2O = [protein]-C-terminal L-amino acid-glycine + a 1,2-diacyl-sn-glycero-3-phospho-L-serine. Inhibited by N-ethylmaleimide. Redox-regulated during autophagy since reducing conditions activate ATG4A whereas an oxidizing environment such as the presence of H(2)O(2) inhibits its activity. The cysteine protease activity compounds is inhibited by styrylquinoline compounds 4-28 and LV-320. Functionally, cysteine protease that plays a key role in autophagy by mediating both proteolytic activation and delipidation of ATG8 family proteins. Required for canonical autophagy (macroautophagy), non-canonical autophagy as well as for mitophagy. The protease activity is required for proteolytic activation of ATG8 family proteins: cleaves the C-terminal amino acid of ATG8 proteins MAP1LC3A, MAP1LC3B, MAP1LC3C, GABARAPL1, GABARAPL2 and GABARAP, to reveal a C-terminal glycine. Exposure of the glycine at the C-terminus is essential for ATG8 proteins conjugation to phosphatidylethanolamine (PE) and insertion to membranes, which is necessary for autophagy. Protease activity is also required to counteract formation of high-molecular weight conjugates of ATG8 proteins (ATG8ylation): acts as a deubiquitinating-like enzyme that removes ATG8 conjugated to other proteins, such as ATG3. In addition to the protease activity, also mediates delipidation of ATG8 family proteins. Catalyzes delipidation of PE-conjugated forms of ATG8 proteins during macroautophagy. Also involved in non-canonical autophagy, a parallel pathway involving conjugation of ATG8 proteins to single membranes at endolysosomal compartments, by catalyzing delipidation of ATG8 proteins conjugated to phosphatidylserine (PS). Compared to other members of the family (ATG4A, ATG4C or ATG4C), constitutes the major protein for proteolytic activation of ATG8 proteins, while it displays weaker delipidation activity than other ATG4 paralogs. Involved in phagophore growth during mitophagy independently of its protease activity and of ATG8 proteins: acts by regulating ATG9A trafficking to mitochondria and promoting phagophore-endoplasmic reticulum contacts during the lipid transfer phase of mitophagy. The polypeptide is Cysteine protease ATG4B (Mus musculus (Mouse)).